An 85-amino-acid chain; its full sequence is Putative defensin-like protein 258 (85 aa).

An N-terminal signal peptide occupies residues 1–25; the sequence is MINVSLKRSLLIFISVITSNIGSEA. Disulfide bonds link Cys-57/Cys-75, Cys-63/Cys-82, and Cys-67/Cys-84.

It belongs to the DEFL family.

It is found in the secreted. This is Putative defensin-like protein 258 from Arabidopsis thaliana (Mouse-ear cress).